Reading from the N-terminus, the 156-residue chain is Cyanate hydratase (156 aa).

Catalysis depends on residues Arg-96, Glu-99, and Ser-122.

This sequence belongs to the cyanase family.

The enzyme catalyses cyanate + hydrogencarbonate + 3 H(+) = NH4(+) + 2 CO2. Its function is as follows. Catalyzes the reaction of cyanate with bicarbonate to produce ammonia and carbon dioxide. This Serratia proteamaculans (strain 568) protein is Cyanate hydratase.